A 267-amino-acid chain; its full sequence is 4-diphosphocytidyl-2-C-methyl-D-erythritol kinase (267 aa).

Lys8 is an active-site residue. Residue Pro90–Ser100 participates in ATP binding. Residue Asp132 is part of the active site.

Belongs to the GHMP kinase family. IspE subfamily.

It carries out the reaction 4-CDP-2-C-methyl-D-erythritol + ATP = 4-CDP-2-C-methyl-D-erythritol 2-phosphate + ADP + H(+). It functions in the pathway isoprenoid biosynthesis; isopentenyl diphosphate biosynthesis via DXP pathway; isopentenyl diphosphate from 1-deoxy-D-xylulose 5-phosphate: step 3/6. Functionally, catalyzes the phosphorylation of the position 2 hydroxy group of 4-diphosphocytidyl-2C-methyl-D-erythritol. In Azobacteroides pseudotrichonymphae genomovar. CFP2, this protein is 4-diphosphocytidyl-2-C-methyl-D-erythritol kinase.